A 117-amino-acid chain; its full sequence is Immunoglobulin kappa variable 1-39 (117 aa).

The N-terminal stretch at Met-1–Cys-22 is a signal peptide. Residues Asp-23–Cys-45 are framework-1. An Ig-like domain is found at Ile-24 to Pro-117. An intrachain disulfide couples Cys-45 to Cys-110. The interval Arg-46–Asn-56 is complementarity-determining-1. The interval Trp-57 to Tyr-71 is framework-2. A complementarity-determining-2 region spans residues Ala-72–Ser-78. A framework-3 region spans residues Gly-79 to Cys-110. A complementarity-determining-3 region spans residues Gln-111–Pro-117.

Immunoglobulins are composed of two identical heavy chains and two identical light chains; disulfide-linked.

The protein localises to the secreted. Its subcellular location is the cell membrane. V region of the variable domain of immunoglobulin light chains that participates in the antigen recognition. Immunoglobulins, also known as antibodies, are membrane-bound or secreted glycoproteins produced by B lymphocytes. In the recognition phase of humoral immunity, the membrane-bound immunoglobulins serve as receptors which, upon binding of a specific antigen, trigger the clonal expansion and differentiation of B lymphocytes into immunoglobulins-secreting plasma cells. Secreted immunoglobulins mediate the effector phase of humoral immunity, which results in the elimination of bound antigens. The antigen binding site is formed by the variable domain of one heavy chain, together with that of its associated light chain. Thus, each immunoglobulin has two antigen binding sites with remarkable affinity for a particular antigen. The variable domains are assembled by a process called V-(D)-J rearrangement and can then be subjected to somatic hypermutations which, after exposure to antigen and selection, allow affinity maturation for a particular antigen. This Homo sapiens (Human) protein is Immunoglobulin kappa variable 1-39.